We begin with the raw amino-acid sequence, 119 residues long: Large ribosomal subunit protein uL18 (119 aa).

This sequence belongs to the universal ribosomal protein uL18 family. In terms of assembly, part of the 50S ribosomal subunit; part of the 5S rRNA/L5/L18/L25 subcomplex. Contacts the 5S and 23S rRNAs.

In terms of biological role, this is one of the proteins that bind and probably mediate the attachment of the 5S RNA into the large ribosomal subunit, where it forms part of the central protuberance. The sequence is that of Large ribosomal subunit protein uL18 from Lactobacillus delbrueckii subsp. bulgaricus (strain ATCC 11842 / DSM 20081 / BCRC 10696 / JCM 1002 / NBRC 13953 / NCIMB 11778 / NCTC 12712 / WDCM 00102 / Lb 14).